Here is a 166-residue protein sequence, read N- to C-terminus: Large ribosomal subunit protein uL10 (166 aa).

Belongs to the universal ribosomal protein uL10 family. As to quaternary structure, part of the ribosomal stalk of the 50S ribosomal subunit. The N-terminus interacts with L11 and the large rRNA to form the base of the stalk. The C-terminus forms an elongated spine to which L12 dimers bind in a sequential fashion forming a multimeric L10(L12)X complex.

Its function is as follows. Forms part of the ribosomal stalk, playing a central role in the interaction of the ribosome with GTP-bound translation factors. The polypeptide is Large ribosomal subunit protein uL10 (Lysinibacillus sphaericus (strain C3-41)).